The chain runs to 220 residues: Probable GTP-binding protein EngB (220 aa).

The EngB-type G domain maps to 41 to 219 (DRSEVCFAGR…RAEIAALAML (179 aa)). Residues 49-56 (GRSNVGKS), 76-80 (GRTRE), 96-99 (DLPG), 164-167 (TKVD), and 197-200 (MTSA) contribute to the GTP site. Ser56 and Thr78 together coordinate Mg(2+).

Belongs to the TRAFAC class TrmE-Era-EngA-EngB-Septin-like GTPase superfamily. EngB GTPase family. Mg(2+) serves as cofactor.

In terms of biological role, necessary for normal cell division and for the maintenance of normal septation. The polypeptide is Probable GTP-binding protein EngB (Hyphomonas neptunium (strain ATCC 15444)).